A 146-amino-acid chain; its full sequence is Hemoglobin subunit beta (146 aa).

Positions 2–146 constitute a Globin domain; it reads HWTAEEKQLI…VAHALARKYH (145 aa). 2 residues coordinate heme b: H63 and H92.

It belongs to the globin family. In terms of assembly, heterotetramer of two alpha chains and two beta chains. As to expression, red blood cells.

In terms of biological role, involved in oxygen transport from the lung to the various peripheral tissues. The polypeptide is Hemoglobin subunit beta (HBB) (Ara ararauna (Blue-and-yellow macaw)).